The chain runs to 234 residues: Kappa-casein (234 aa).

The N-terminal stretch at 1-21 (MMKSFLLVVNIVALTLPFLAA) is a signal peptide. 3 tandem repeats follow at residues 127–153 (LGKATILSTDAIAAPEQTPVSAAQPTV), 154–179 (SAGDTPEVSSQFIDTPDTSVLAEEAR), and 180–207 (ESPEDTPEISEFINAPDTAVPSEEPRES). Positions 127-207 (LGKATILSTD…AVPSEEPRES (81 aa)) are 3 X 27 AA tandem repeats. The disordered stretch occupies residues 143–234 (QTPVSAAQPT…STGPAIASMA (92 aa)). O-linked (GalNAc...) threonine glycosylation is present at Thr-144. The segment covering 144 to 171 (TPVSAAQPTVSAGDTPEVSSQFIDTPDT) has biased composition (polar residues). At Thr-158 the chain carries Phosphothreonine. Ser-162 is subject to Phosphoserine; alternate. Ser-162 carries an O-linked (GalNAc...) serine; alternate glycan.

It belongs to the kappa-casein family. In terms of tissue distribution, mammary gland specific. Secreted in milk.

The protein localises to the secreted. Functionally, kappa-casein stabilizes micelle formation, preventing casein precipitation in milk. In Cavia porcellus (Guinea pig), this protein is Kappa-casein (CSN3).